We begin with the raw amino-acid sequence, 265 residues long: Cell division protein DivIB (265 aa).

Over 1 to 33 (MRMELKMMGNVNKSNKTNEYILRRHKKKRKKKL) the chain is Cytoplasmic. The chain crosses the membrane as a helical span at residues 34–54 (IIFSILLISILVTLCFKHPFF). The region spanning 54-122 (FNVKIVEVKD…NKIVIHIKER (69 aa)) is the POTRA domain. Topologically, residues 55–265 (NVKIVEVKDN…FKGNPVVFIK (211 aa)) are extracellular.

Belongs to the FtsQ/DivIB family. DivIB subfamily.

It is found in the cell membrane. Its function is as follows. Cell division protein that may be involved in stabilizing or promoting the assembly of the division complex. In Clostridium tetani (strain Massachusetts / E88), this protein is Cell division protein DivIB.